The chain runs to 327 residues: MLKKCLPLLLLCTAPVFAKPVLTVYTYDSFAADWGPGPVVKKAFEADCNCELKLVALEDGVSLLNRLRMEGKNSKADVVLGLDNNLLDAASKTGLFAKSGVAADAVNVPGGWNNDTFVPFDYGYFAFVYDKNKLKNPPQSLKELVESDQNWRVIYQDPRTSTPGLGLLLWMQKVYGDDAPQAWQKLAKKTVTVTKGWSEAYGLFLKGESDLVLSYTTSPAYHILEEKKDNYAAANFSEGHYLQVEVAARTAASKQPELAQKFLQFMVSPAFQNAIPTGNWMYPVANVTLPAGFEKLTKPATTLEFTPAEVAAQRQAWISEWQRAVSR.

The first 18 residues, 1-18 (MLKKCLPLLLLCTAPVFA), serve as a signal peptide directing secretion. Thiamine contacts are provided by residues 59-60 (DG), 161-162 (ST), tryptophan 197, and 215-218 (YTTS).

This sequence belongs to the bacterial solute-binding protein 1 family. As to quaternary structure, monomer in solution. The complex is composed of two ATP-binding proteins (ThiQ), two transmembrane proteins (ThiP) and a solute-binding protein (ThiB).

Its subcellular location is the periplasm. Its activity is regulated as follows. Transport is inhibited by the sulfhydryl-specific modifier N-ethylmaleimide. In terms of biological role, part of the ABC transporter complex ThiBPQ involved in thiamine import. Binds thiamine, thiamine phosphate and thiamine diphosphate with high affinity. This Escherichia coli (strain K12) protein is Thiamine-binding periplasmic protein (thiB).